The sequence spans 430 residues: Mitochondrial distribution and morphology protein 12 (430 aa).

The region spanning 1–430 is the SMP-LTD domain; sequence MSIDIDWERA…VYPSFWTFLI (430 aa). Disordered regions lie at residues 61–117, 177–276, and 352–377; these read DLSD…YESN, TPLG…RMRE, and MGPE…KPSS. A compositionally biased stretch (acidic residues) spans 69 to 82; that stretch reads FYEDDDENFSDSSE. Basic and acidic residues predominate over residues 85-96; it reads SPTREPVDRYGN. 2 stretches are compositionally biased toward polar residues: residues 211-233 and 241-251; these read SAQS…SMSI and ASQGMPNNQGQ. Basic and acidic residues predominate over residues 265–276; it reads PLDDTPPRRMRE.

The protein belongs to the MDM12 family. In terms of assembly, component of the ER-mitochondria encounter structure (ERMES) or MDM complex, composed of MMM1, MDM10, MDM12 and MDM34. An MMM1 homodimer associates with one molecule of MDM12 on each side in a pairwise head-to-tail manner, and the SMP-LTD domains of MMM1 and MDM12 generate a continuous hydrophobic tunnel for phospholipid trafficking.

The protein localises to the mitochondrion outer membrane. It is found in the endoplasmic reticulum membrane. Component of the ERMES/MDM complex, which serves as a molecular tether to connect the endoplasmic reticulum (ER) and mitochondria. Components of this complex are involved in the control of mitochondrial shape and protein biogenesis, and function in nonvesicular lipid trafficking between the ER and mitochondria. MDM12 is required for the interaction of the ER-resident membrane protein MMM1 and the outer mitochondrial membrane-resident beta-barrel protein MDM10. The MDM12-MMM1 subcomplex functions in the major beta-barrel assembly pathway that is responsible for biogenesis of all mitochondrial outer membrane beta-barrel proteins, and acts in a late step after the SAM complex. The MDM10-MDM12-MMM1 subcomplex further acts in the TOM40-specific pathway after the action of the MDM12-MMM1 complex. Essential for establishing and maintaining the structure of mitochondria and maintenance of mtDNA nucleoids. This chain is Mitochondrial distribution and morphology protein 12, found in Ajellomyces capsulatus (strain G186AR / H82 / ATCC MYA-2454 / RMSCC 2432) (Darling's disease fungus).